Here is a 179-residue protein sequence, read N- to C-terminus: Natural killer cells antigen CD94 (179 aa).

The Cytoplasmic portion of the chain corresponds to M1 to R10. A helical; Signal-anchor for type II membrane protein membrane pass occupies residues L11–L31. Residues K32–I179 are Extracellular-facing. 2 cysteine pairs are disulfide-bonded: C58–C70 and C61–C72. Residues Y68 to K175 enclose the C-type lectin domain. Residues N83 and N132 are each glycosylated (N-linked (GlcNAc...) asparagine). 2 disulfides stabilise this stretch: C89/C174 and C152/C166.

As to quaternary structure, can form disulfide-bonded heterodimer with NKG2 family members KLRC1 and KLRC2. KLRD1-KLRC1 heterodimer interacts with peptide-bound MHC-E-B2M heterotrimeric complex. KLRD1 plays a prominent role in directly interacting with MHC-E. KLRD1-KLRC1 interacts with much higher affinity with peptide-bound MHC-E-B2M than KLRD1-KLRC2. Interacts with the adapter protein TYROBP/DAP12; this interaction is required for cell surface expression and cell activation. In terms of tissue distribution, natural killer cells.

The protein resides in the cell membrane. Its function is as follows. Immune receptor involved in self-nonself discrimination. In complex with KLRC1 or KLRC2 on cytotoxic and regulatory lymphocyte subsets, recognizes non-classical major histocompatibility (MHC) class Ib molecule MHC-E loaded with self-peptides derived from the signal sequence of classical MHC class Ia and non-classical MHC class Ib molecules. Enables cytotoxic cells to monitor the expression of MHC class I molecules in healthy cells and to tolerate self. Primarily functions as a ligand binding subunit as it lacks the capacity to signal. KLRD1-KLRC1 acts as an immune inhibitory receptor. Key inhibitory receptor on natural killer (NK) cells that regulates their activation and effector functions. Dominantly counteracts T cell receptor signaling on a subset of memory/effector CD8-positive T cells as part of an antigen-driven response to avoid autoimmunity. On intraepithelial CD8-positive gamma-delta regulatory T cells triggers TGFB1 secretion, which in turn limits the cytotoxic programming of intraepithelial CD8-positive alpha-beta T cells, distinguishing harmless from pathogenic antigens. In MHC-E-rich tumor microenvironment, acts as an immune inhibitory checkpoint and may contribute to progressive loss of effector functions of NK cells and tumor-specific T cells, a state known as cell exhaustion. Upon MHC-E-peptide binding, transmits intracellular signals through KLRC1 immunoreceptor tyrosine-based inhibition motifs (ITIMs) by recruiting INPP5D/SHIP-1 and INPPL1/SHIP-2 tyrosine phosphatases to ITIMs, and ultimately opposing signals transmitted by activating receptors through dephosphorylation of proximal signaling molecules. In terms of biological role, KLRD1-KLRC2 acts as an immune activating receptor. On cytotoxic lymphocyte subsets recognizes MHC-E loaded with signal sequence-derived peptides from non-classical MHC class Ib MHC-G molecules, likely playing a role in the generation and effector functions of adaptive NK cells and in maternal-fetal tolerance during pregnancy. Regulates the effector functions of terminally differentiated cytotoxic lymphocyte subsets, and in particular may play a role in adaptive NK cell response to viral infection. Upon MHC-E-peptide binding, transmits intracellular signals via the adapter protein TYROBP/DAP12, triggering the phosphorylation of proximal signaling molecules and cell activation. This is Natural killer cells antigen CD94 (KLRD1) from Pan troglodytes (Chimpanzee).